The chain runs to 294 residues: Porphobilinogen deaminase (294 aa).

Cys-232 is modified (S-(dipyrrolylmethanemethyl)cysteine).

This sequence belongs to the HMBS family. In terms of assembly, monomer. Requires dipyrromethane as cofactor.

It carries out the reaction 4 porphobilinogen + H2O = hydroxymethylbilane + 4 NH4(+). It functions in the pathway porphyrin-containing compound metabolism; protoporphyrin-IX biosynthesis; coproporphyrinogen-III from 5-aminolevulinate: step 2/4. In terms of biological role, tetrapolymerization of the monopyrrole PBG into the hydroxymethylbilane pre-uroporphyrinogen in several discrete steps. The protein is Porphobilinogen deaminase of Corynebacterium diphtheriae (strain ATCC 700971 / NCTC 13129 / Biotype gravis).